The following is a 295-amino-acid chain: UDP-N-acetylenolpyruvoylglucosamine reductase (295 aa).

Residues 23-188 (KVGGPADFLA…ISAKFALKPG (166 aa)) form the FAD-binding PCMH-type domain. Arginine 167 is an active-site residue. Serine 217 serves as the catalytic Proton donor. The active site involves glutamate 287.

This sequence belongs to the MurB family. The cofactor is FAD.

The protein localises to the cytoplasm. The enzyme catalyses UDP-N-acetyl-alpha-D-muramate + NADP(+) = UDP-N-acetyl-3-O-(1-carboxyvinyl)-alpha-D-glucosamine + NADPH + H(+). The protein operates within cell wall biogenesis; peptidoglycan biosynthesis. Its function is as follows. Cell wall formation. This is UDP-N-acetylenolpyruvoylglucosamine reductase from Streptococcus pyogenes serotype M6 (strain ATCC BAA-946 / MGAS10394).